The chain runs to 349 residues: Protein-glutamate methylesterase/protein-glutamine glutaminase (349 aa).

One can recognise a Response regulatory domain in the interval 5–122 (RVLSVDDSAL…REGMLAYSEM (118 aa)). 4-aspartylphosphate is present on aspartate 56. A CheB-type methylesterase domain is found at 152–344 (LLSSEKLIAI…QQMLATISAG (193 aa)). Active-site residues include serine 164, histidine 190, and aspartate 286.

The protein belongs to the CheB family. Post-translationally, phosphorylated by CheA. Phosphorylation of the N-terminal regulatory domain activates the methylesterase activity.

It localises to the cytoplasm. It catalyses the reaction [protein]-L-glutamate 5-O-methyl ester + H2O = L-glutamyl-[protein] + methanol + H(+). The enzyme catalyses L-glutaminyl-[protein] + H2O = L-glutamyl-[protein] + NH4(+). Involved in chemotaxis. Part of a chemotaxis signal transduction system that modulates chemotaxis in response to various stimuli. Catalyzes the demethylation of specific methylglutamate residues introduced into the chemoreceptors (methyl-accepting chemotaxis proteins or MCP) by CheR. Also mediates the irreversible deamidation of specific glutamine residues to glutamic acid. In Shigella flexneri, this protein is Protein-glutamate methylesterase/protein-glutamine glutaminase.